Reading from the N-terminus, the 252-residue chain is uncharacterized protein (252 aa).

A signal peptide spans 1-20 (MIATLGNLIIPVIFVNYVAS).

The protein belongs to the ascovirus HvAV ORF17 family.

This is an uncharacterized protein from Spodoptera frugiperda ascovirus 1a (SfAV-1a).